The primary structure comprises 869 residues: Facilitated trehalose transporter Tret1 (869 aa).

Disordered regions lie at residues 1–214 and 258–315; these read MSGR…QKAT and KESS…LIHR. Topologically, residues 1 to 404 are cytoplasmic; the sequence is MSGRDNRGAG…VYRPTTNPIY (404 aa). A compositionally biased stretch (basic and acidic residues) spans 25 to 43; the sequence is KLKEKLTRAGDDQGYHRVE. Composition is skewed to low complexity over residues 44–57, 79–92, and 118–127; these read SNLS…SLDT, PQQQ…QQLR, and PFQQQQQRTP. Basic and acidic residues-rich tracts occupy residues 147-156 and 258-291; these read EIREHRDRQQ and KESS…KLDK. Ser260, Ser261, Ser262, Ser332, and Ser334 each carry phosphoserine. The interval 336 to 368 is disordered; it reads EDFHTSRQHFQQQRSISTDSRKSRRPYEMDEMG. Residues 343–353 show a composition bias toward polar residues; the sequence is QHFQQQRSIST. Basic and acidic residues predominate over residues 354-368; sequence DSRKSRRPYEMDEMG. A helical membrane pass occupies residues 405–425; it reads IWTQVLAALSVSLGSLVVGFV. Topologically, residues 426-452 are extracellular; the sequence is SAYTSPALVSMTNRNMTSFEVTPQAAS. Asn440 carries an N-linked (GlcNAc...) asparagine glycan. Residues 453 to 473 traverse the membrane as a helical segment; it reads WVGGIMPLAGLAGGIAGGPFI. The Cytoplasmic portion of the chain corresponds to 474–485; the sequence is EYLGRRNTILAT. Residues 486–506 traverse the membrane as a helical segment; the sequence is AIPFIVSSLLIACAVNVAMVL. The Extracellular portion of the chain corresponds to 507–509; the sequence is AGR. Residues 510-530 form a helical membrane-spanning segment; the sequence is FLAGFCVGIASLSLPVYLGET. Residues 531–536 lie on the Cytoplasmic side of the membrane; it reads VQPEVR. A helical transmembrane segment spans residues 537 to 557; that stretch reads GTLGLLPTAFGNIGILLCFVA. Residues 558–564 are Extracellular-facing; sequence GTYMDWS. A helical transmembrane segment spans residues 565-585; the sequence is MLAFLGAALPVPFLILMFLIP. The Cytoplasmic segment spans residues 586 to 654; it reads ETPRWFVSRG…NLKPLSISLG (69 aa). A helical membrane pass occupies residues 655–675; the sequence is LMFFQQLSGINAVIFYTVSIF. Over 676–685 the chain is Extracellular; the sequence is KDAGSTIDGN. A helical membrane pass occupies residues 686–706; it reads LCTIIVGIVNFMATFIATLLI. At 707–712 the chain is on the cytoplasmic side; it reads DRAGRK. A helical transmembrane segment spans residues 713-733; the sequence is ILLYVSNIAMIITLFVLGGFF. The Extracellular portion of the chain corresponds to 734–752; that stretch reads YCKSHGQDVSQLGWLPLSC. Residues 753 to 773 form a helical membrane-spanning segment; the sequence is FVIYILGFSLGFGPIPWLMMG. At 774–779 the chain is on the cytoplasmic side; the sequence is EILPSK. The helical transmembrane segment at 780-800 threads the bilayer; sequence IRGSAASVATAFNWSCTFVVT. The Extracellular segment spans residues 801–813; that stretch reads KTFQDMIDFMGAH. The chain crosses the membrane as a helical span at residues 814-834; the sequence is GAFWLFGSICFIGLFFVILYV. At 835–869 the chain is on the cytoplasmic side; it reads PETQGKTLEDIERKMMGRVRRMSSVANMKPLAFNM. Phosphoserine is present on residues Ser857 and Ser858.

It belongs to the major facilitator superfamily. Sugar transporter (TC 2.A.1.1) family. Trehalose transporter subfamily.

The protein localises to the cell membrane. Low-capacity facilitative transporter for trehalose. Does not transport maltose, sucrose or lactose. Mediates the bidirectional transfer of trehalose. Responsible for the transport of trehalose synthesized in the fat body and the incorporation of trehalose into other tissues that require a carbon source, thereby regulating trehalose levels in the hemolymph. In Drosophila persimilis (Fruit fly), this protein is Facilitated trehalose transporter Tret1.